Consider the following 404-residue polypeptide: Cysteine desulfurase IscS (404 aa).

Pyridoxal 5'-phosphate contacts are provided by residues 75 to 76 (AT), N155, Q183, and 203 to 205 (SSH). K206 bears the N6-(pyridoxal phosphate)lysine mark. T243 contacts pyridoxal 5'-phosphate. Residue C328 is the Cysteine persulfide intermediate of the active site. Position 328 (C328) interacts with [2Fe-2S] cluster.

It belongs to the class-V pyridoxal-phosphate-dependent aminotransferase family. NifS/IscS subfamily. Homodimer. Forms a heterotetramer with IscU, interacts with other sulfur acceptors. It depends on pyridoxal 5'-phosphate as a cofactor.

It localises to the cytoplasm. It carries out the reaction (sulfur carrier)-H + L-cysteine = (sulfur carrier)-SH + L-alanine. The protein operates within cofactor biosynthesis; iron-sulfur cluster biosynthesis. Functionally, master enzyme that delivers sulfur to a number of partners involved in Fe-S cluster assembly, tRNA modification or cofactor biosynthesis. Catalyzes the removal of elemental sulfur atoms from cysteine to produce alanine. Functions as a sulfur delivery protein for Fe-S cluster synthesis onto IscU, an Fe-S scaffold assembly protein, as well as other S acceptor proteins. The sequence is that of Cysteine desulfurase IscS from Haemophilus influenzae (strain PittEE).